We begin with the raw amino-acid sequence, 310 residues long: Cytochrome f (310 aa).

A signal peptide spans 1-23 (MRRLLSSTFAALIVGLAVFSAPA). The heme site is built by tyrosine 28, cysteine 48, cysteine 51, and histidine 52. A helical membrane pass occupies residues 277–297 (IYGMLAFFAAVALAQIMLVLK).

The protein belongs to the cytochrome f family. As to quaternary structure, the 4 large subunits of the cytochrome b6-f complex are cytochrome b6, subunit IV (17 kDa polypeptide, PetD), cytochrome f and the Rieske protein, while the 4 small subunits are PetG, PetL, PetM and PetN. The complex functions as a dimer. It depends on heme as a cofactor.

Its subcellular location is the cellular thylakoid membrane. Its function is as follows. Component of the cytochrome b6-f complex, which mediates electron transfer between photosystem II (PSII) and photosystem I (PSI), cyclic electron flow around PSI, and state transitions. This Synechococcus sp. (strain CC9311) protein is Cytochrome f.